We begin with the raw amino-acid sequence, 336 residues long: 4-hydroxythreonine-4-phosphate dehydrogenase (336 aa).

Substrate is bound at residue T140. A divalent metal cation is bound by residues H171, H216, and H271. Residues K279, N288, and R297 each contribute to the substrate site.

The protein belongs to the PdxA family. As to quaternary structure, homodimer. It depends on Zn(2+) as a cofactor. Mg(2+) is required as a cofactor. Co(2+) serves as cofactor.

The protein localises to the cytoplasm. It catalyses the reaction 4-(phosphooxy)-L-threonine + NAD(+) = 3-amino-2-oxopropyl phosphate + CO2 + NADH. Its pathway is cofactor biosynthesis; pyridoxine 5'-phosphate biosynthesis; pyridoxine 5'-phosphate from D-erythrose 4-phosphate: step 4/5. In terms of biological role, catalyzes the NAD(P)-dependent oxidation of 4-(phosphooxy)-L-threonine (HTP) into 2-amino-3-oxo-4-(phosphooxy)butyric acid which spontaneously decarboxylates to form 3-amino-2-oxopropyl phosphate (AHAP). The sequence is that of 4-hydroxythreonine-4-phosphate dehydrogenase from Erythrobacter litoralis (strain HTCC2594).